Consider the following 262-residue polypeptide: Late embryogenesis abundant protein 31 (262 aa).

Residues 6–10 carry the Nuclear localization signal (NLS) motif; it reads QPKRP. 3 SMP domains span residues 14 to 68, 136 to 192, and 201 to 260; these read VTYG…ANKR, ITIG…NHNA, and IKLI…NERA.

Belongs to the LEA type SMP family. In terms of tissue distribution, embryo specific, only in dry mature seeds.

Its subcellular location is the nucleus. The protein localises to the nucleolus. It is found in the cytoplasm. LEA proteins are late embryonic proteins abundant in higher plant seed embryos. The function of those proteins is not known. Promotes germination rate. Enhances cation toxicity (e.g. lithium ion) and osmotic stress (e.g. NaCl and sorbitol) tolerance during germination and in seedlings. This Arabidopsis thaliana (Mouse-ear cress) protein is Late embryogenesis abundant protein 31.